A 255-amino-acid chain; its full sequence is Ly6/PLAUR domain-containing protein 8 (255 aa).

The N-terminal stretch at 1-20 is a signal peptide; that stretch reads MRGVFIAGVIAAFAITVVDS. Residues Asn22, Asn30, Asn53, Asn72, Asn76, Asn105, Asn115, Asn128, Asn154, Asn169, Asn179, Asn200, and Asn210 are each glycosylated (N-linked (GlcNAc...) asparagine). The UPAR/Ly6 domain maps to 121-170; that stretch reads CMSCYGHNKTLCEEKPQKCYEGEQCVFIIAEMVNGSGRVELKGCSDISNS. Ser233 carries the GPI-anchor amidated serine lipid modification. Residues 234–255 constitute a propeptide, removed in mature form; sequence MGTKASFTSSIFGSLLLLKLLF.

This sequence belongs to the CNF-like-inhibitor family. Highly N-glycosylated. Not O-glycosylated. In terms of processing, GPI-anchored. The GPI-anchor is cleaved, leading to secretion into the colonic lumen. As to expression, specifically present in enterocytes located at the uppermost epithelial layer of the colon (at protein level). Exclusively expressed in the large intestine: specifically expressed on the apical surface of epithelial cells located at the uppermost layer of the colonic gland.

The protein resides in the cell membrane. The protein localises to the secreted. Secreted protein specifically required to prevent invasion of Gram-negative bacteria in the inner mucus layer of the colon epithelium, a portion of the large intestine which is free of commensal microbiota. Prevents invasion of flagellated microbiota by binding to the flagellum of bacteria, such as P.mirabilis, thereby inhibiting bacterial motility in the intestinal lumen. Segregation of intestinal bacteria and epithelial cells in the colon is required to preserve intestinal homeostasis. The chain is Ly6/PLAUR domain-containing protein 8 from Mus musculus (Mouse).